Reading from the N-terminus, the 554-residue chain is MGCSLNKLEKREEKRPGNIYSTLKRPQVETKVDVTYEYCFLEFTTLTAAELPRSSATRLASLRDLPDQLLELYQQGFSLAALHPFVQPTRRQEKILLEHIFRAILVKKTNRSQKAELHDEGYTLELDYCSSLEHLADQKLIPEFIKKVQEAASQGLKFVSVVPQYQPSVSSAGSRRLKPVANSVEDARDVKCTLGDRSSLENDTPKAAETDAATAGVNRRPETKPGSTGDVPSAQQPGIPSPSAENEAGEFPLRGLQPALDRSEGDPSNGPEELPSRKMEIFAFFNRPKSQQKCRQYYPVTIPLQVSKNGQTVSSLDASWLEHMSDHFRKGGVLVNAVFQLGMANDSFYGLTDGVFIFEAVSTEDNRTTQGYDAIVVEQWTVLEGTEVQTDYMPLLNSLAAYGWQLTCVLPTPILKTTREGNVSTKQIVFLQRPCLPQKTKKRESKFQWRFSRNEIHGRQTRKSKGKLSASNKQQAEENEKNLEDQFSKAGDVGNCVLGAPQWGRASEVREQRQGSAAVQNGPAGHNRDSVALRHSNPRAEAELAAGPTPTEAN.

Residue G2 is the site of N-myristoyl glycine attachment. C3 carries S-palmitoyl cysteine lipidation. A phosphoserine mark is found at S183 and S199. Disordered regions lie at residues 192–249 (CTLG…NEAG), 441–488 (KKRE…DQFS), and 504–554 (GRAS…TEAN). Basic and acidic residues-rich tracts occupy residues 198–209 (SSLENDTPKAAE) and 475–487 (QAEENEKNLEDQF). 2 positions are modified to phosphoserine: S507 and S530. The segment covering 526–542 (HNRDSVALRHSNPRAEA) has biased composition (basic and acidic residues).

The protein belongs to the raftlin family. Interacts with TLR4; the interaction occurs in response to lipopolysaccharide stimulation. Interacts with CLTC; the interaction occurs in response to pathogens. Interacts with AP2A1 and AP2B1. Expressed in T-cells, B-cells, thymus and spleen (at protein level). Expressed in dendritic cells, macrophages, heart, lung and small intestine.

The protein localises to the cell membrane. Its subcellular location is the cytoplasm. The protein resides in the membrane raft. It is found in the endosome. It localises to the early endosome. Functionally, involved in protein trafficking via association with clathrin and AP2 complex. Upon bacterial lipopolysaccharide stimulation, mediates internalization of TLR4 to endosomes in dendritic cells and macrophages, and internalization of poly(I:C) to TLR3-positive endosomes in myeloid dendritic cells and epithelial cells; resulting in activation of TICAM1-mediated signaling and subsequent IFNB1 production. Involved in T-cell antigen receptor-mediated signaling by regulating tyrosine kinase LCK localization, T-cell dependent antibody production and cytokine secretion. May regulate B-cell antigen receptor-mediated signaling. May play a pivotal role in the formation and/or maintenance of lipid rafts. The protein is Raftlin (Rftn1) of Mus musculus (Mouse).